A 457-amino-acid chain; its full sequence is Tubulin beta chain (457 aa).

Residues glutamine 11, glutamate 69, serine 138, glycine 142, threonine 143, glycine 144, asparagine 204, and asparagine 226 each coordinate GTP. Glutamate 69 serves as a coordination point for Mg(2+). 2 positions are modified to phosphoserine: serine 278 and serine 280. A disordered region spans residues 423–457; it reads QQYQEATVEDDEEVDENGDFGAPQNQDEPITENFE. Acidic residues predominate over residues 429–440; the sequence is TVEDDEEVDENG.

It belongs to the tubulin family. In terms of assembly, dimer of alpha and beta chains. A typical microtubule is a hollow water-filled tube with an outer diameter of 25 nm and an inner diameter of 15 nM. Alpha-beta heterodimers associate head-to-tail to form protofilaments running lengthwise along the microtubule wall with the beta-tubulin subunit facing the microtubule plus end conferring a structural polarity. Microtubules usually have 13 protofilaments but different protofilament numbers can be found in some organisms and specialized cells. Mg(2+) is required as a cofactor.

It localises to the cytoplasm. Its subcellular location is the cytoskeleton. Its function is as follows. Tubulin is the major constituent of microtubules, a cylinder consisting of laterally associated linear protofilaments composed of alpha- and beta-tubulin heterodimers. Microtubules grow by the addition of GTP-tubulin dimers to the microtubule end, where a stabilizing cap forms. Below the cap, tubulin dimers are in GDP-bound state, owing to GTPase activity of alpha-tubulin. The sequence is that of Tubulin beta chain (TUB2) from Saccharomyces cerevisiae (strain ATCC 204508 / S288c) (Baker's yeast).